Consider the following 213-residue polypeptide: Large ribosomal subunit protein uL3 (213 aa).

The protein belongs to the universal ribosomal protein uL3 family. Part of the 50S ribosomal subunit. Forms a cluster with proteins L14 and L19.

Functionally, one of the primary rRNA binding proteins, it binds directly near the 3'-end of the 23S rRNA, where it nucleates assembly of the 50S subunit. The polypeptide is Large ribosomal subunit protein uL3 (Desulforudis audaxviator (strain MP104C)).